The following is an 856-amino-acid chain: DNA mismatch repair protein MutS (856 aa).

Position 623–630 (623–630 (GPNMSGKS)) interacts with ATP.

It belongs to the DNA mismatch repair MutS family.

This protein is involved in the repair of mismatches in DNA. It is possible that it carries out the mismatch recognition step. This protein has a weak ATPase activity. The polypeptide is DNA mismatch repair protein MutS (Natronomonas pharaonis (strain ATCC 35678 / DSM 2160 / CIP 103997 / JCM 8858 / NBRC 14720 / NCIMB 2260 / Gabara) (Halobacterium pharaonis)).